An 89-amino-acid chain; its full sequence is UPF0367 protein P9515_01381 (89 aa).

It belongs to the UPF0367 family.

This is UPF0367 protein P9515_01381 from Prochlorococcus marinus (strain MIT 9515).